A 605-amino-acid chain; its full sequence is MADPKGSTSKDGLDDWCIVEAECSDVDNDLEELFDRDTDSDISELLDDNDLEQGNSRELFHQQECKDSEEQLQKLKRKYISPKAIAQLSPRLESISLSPQQKSKRRLFAEQDSGLELTLTNEAEDVSSEVEEVPALDSQPVAEGHLGTVDIHYTELLRASNHKAILLAKFKEAFGIGFNDLTRQFKSYKTCCNDWVLSVYAVHEDLLESSKQLLQQHCDYIWIRGIAAMSLFLLCFKAGKNRGTVHKLMTSMLNVHEKQILSEPPKLRNVAAALFWYKGAMGSGAFSHGPYPNWMAQQTIVGHQSTEASAFDLSEMIQWAFDHNYLDEADIAFQYAKLAPENSNAVAWLAHNNQARFVRECASMVRFYKKGQMKEMSMSEWIYARINEVEGEGHWSSIAKFLRYQQVNVIMFLAALKDMLHSVPKHNCILIHGPPNTGKSAFTMSLIHVLKGRVLSFVNSKSQFWLQPMSETKIALIDDVTDPCWVYMDTYLRNGLDGHYVSLDCKHKAPIQTKFPALLLTSNINVHNEVNYRYLHSRIKGFEFPNPFPMKPDNTPEFELTDQSWKSFFTRLWKQLELSDQEDEGENGESQQAFQCSARSANEHL.

The Nuclear localization signal motif lies at 76–78 (KRK). Residues S81 and S89 each carry the phosphoserine; by host modification. The short motif at 88-97 (LSPRLESISL) is the Nuclear export signal element. Residues 145–308 (HLGTVDIHYT…TIVGHQSTEA (164 aa)) are DNA-binding region. Residues 407–557 (VNVIMFLAAL…FPMKPDNTPE (151 aa)) enclose the SF3 helicase domain. 433–440 (GPPNTGKS) is a binding site for ATP. K514 participates in a covalent cross-link: Glycyl lysine isopeptide (Lys-Gly) (interchain with G-Cter in SUMO). Residues 580 to 605 (DQEDEGENGESQQAFQCSARSANEHL) are disordered. Residues 588 to 605 (GESQQAFQCSARSANEHL) are compositionally biased toward polar residues.

Belongs to the papillomaviridae E1 protein family. As to quaternary structure, can form hexamers. Interacts with E2 protein; this interaction increases E1 DNA binding specificity. Interacts with host DNA polymerase subunit POLA2. Interacts with host single stranded DNA-binding protein RPA1. Interacts with host TOP1; this interaction stimulates the enzymatic activity of TOP1. Post-translationally, phosphorylated. Sumoylated.

It is found in the host nucleus. It catalyses the reaction Couples ATP hydrolysis with the unwinding of duplex DNA by translocating in the 3'-5' direction.. The enzyme catalyses ATP + H2O = ADP + phosphate + H(+). Functionally, ATP-dependent DNA 3'-5' helicase required for initiation of viral DNA replication. It forms a complex with the viral E2 protein. The E1-E2 complex binds to the replication origin which contains binding sites for both proteins. During the initial step, a dimer of E1 interacts with a dimer of protein E2 leading to a complex that binds the viral origin of replication with high specificity. Then, a second dimer of E1 displaces the E2 dimer in an ATP-dependent manner to form the E1 tetramer. Following this, two E1 monomers are added to each half of the site, which results in the formation of two E1 trimers on the viral ori. Subsequently, two hexamers will be created. The double hexamer acts as a bi-directional helicase machinery and unwinds the viral DNA and then recruits the host DNA polymerase to start replication. In Homo sapiens (Human), this protein is Replication protein E1.